Here is a 158-residue protein sequence, read N- to C-terminus: MGRFTFVSFGLLVVFLSLSGTGADFDCIPGWSAYDRYCYQAFSEPKNWEDAESFCEEGVKTSHLVSIESSGEGDFVAQLVAEKIKTSFQYVWIGLRIQNKEQQCRSEWSDASSVNYENLFKQSSKKCYALKKGTELRTWFNVYCGRENPFVCKYTPEC.

The signal sequence occupies residues 1–23 (MGRFTFVSFGLLVVFLSLSGTGA). Disulfide bonds link C27–C38, C55–C152, and C127–C144. A C-type lectin domain is found at 34-153 (YDRYCYQAFS…CGRENPFVCK (120 aa)).

Belongs to the snaclec family. In terms of assembly, dimer and tetramer of heterodimers of alpha and beta subunits ((alphabeta)(2) and (alphabeta)(4)); disulfide-linked. These two multimeric forms are found. Post-translationally, the complex is glycosylated. Expressed by the venom gland.

Its subcellular location is the secreted. Functionally, potent platelet activator that acts via GPIb (GP1BA/GP1BB). After activation by the toxin, the receptor is redistributed on platelet surface thanks to cytoskeletal translocation. The indirect activation of integrin alpha-IIb/beta-3 (ITGA2B/ITGB3) also induced by the toxin is downstream the cytoskeletal translocation of GPIb. This chain is Snaclec mucetin subunit alpha, found in Protobothrops mucrosquamatus (Taiwan habu).